Reading from the N-terminus, the 362-residue chain is Cytochrome c peroxidase, mitochondrial (362 aa).

The N-terminal 40 residues, 1-40 (MASASRQILRAASRASTRTAFAPAASRGLAARTIAGRRFY), are a transit peptide targeting the mitochondrion. Histidine 121 acts as the Proton acceptor in catalysis. Position 244 (histidine 244) interacts with heme b. Tryptophan 260 serves as the catalytic Tryptophan radical intermediate.

Belongs to the peroxidase family. Cytochrome c peroxidase subfamily. In terms of assembly, forms a one-to-one complex with cytochrome c. The cofactor is heme b.

Its subcellular location is the mitochondrion matrix. The protein localises to the mitochondrion intermembrane space. It catalyses the reaction 2 Fe(II)-[cytochrome c] + H2O2 + 2 H(+) = 2 Fe(III)-[cytochrome c] + 2 H2O. Destroys radicals which are normally produced within the cells and which are toxic to biological systems. The polypeptide is Cytochrome c peroxidase, mitochondrial (CCP1) (Pyricularia oryzae (strain 70-15 / ATCC MYA-4617 / FGSC 8958) (Rice blast fungus)).